We begin with the raw amino-acid sequence, 418 residues long: Glycine betaine transport ATP-binding protein OpuAA (418 aa).

The ABC transporter domain occupies 34 to 270; sequence KTKKEILKAT…PSNEYVEKFV (237 aa). An ATP-binding site is contributed by 66–73; it reads GLSGSGKS. CBS domains lie at 284–340 and 344–403; these read IMKR…DLSL and LNTE…INAE.

The protein belongs to the ABC transporter superfamily. In terms of assembly, the complex is composed of two ATP-binding proteins (OpuAA), two transmembrane proteins (OpuAB) and a solute-binding protein (OpuAC).

The catalysed reaction is a quaternary ammonium(out) + ATP + H2O = a quaternary ammonium(in) + ADP + phosphate + H(+). Functionally, involved in a multicomponent binding-protein-dependent transport system for glycine betaine. Probably responsible for energy coupling to the transport system. The protein is Glycine betaine transport ATP-binding protein OpuAA (opuAA) of Bacillus subtilis (strain 168).